A 287-amino-acid chain; its full sequence is Putative B3 domain-containing protein Os08g0157700 (287 aa).

Residues 17–29 (ATEEEEEEEEEEQ) show a composition bias toward acidic residues. Positions 17 to 36 (ATEEEEEEEEEEQALGQEPA) are disordered. The TF-B3 DNA-binding region spans 71–168 (FDKVVTPSDV…RYFIDYRHCH (98 aa)).

It is found in the nucleus. In Oryza sativa subsp. japonica (Rice), this protein is Putative B3 domain-containing protein Os08g0157700.